Consider the following 257-residue polypeptide: Triosephosphate isomerase, cytosolic (257 aa).

Asn-10 and Lys-12 together coordinate substrate. Residue His-96 is the Electrophile of the active site. Glu-167 serves as the catalytic Proton acceptor.

It belongs to the triosephosphate isomerase family. In terms of assembly, homodimer. In terms of tissue distribution, higher levels found in leaves than in roots.

The protein localises to the cytoplasm. The catalysed reaction is D-glyceraldehyde 3-phosphate = dihydroxyacetone phosphate. It functions in the pathway carbohydrate biosynthesis; gluconeogenesis. It participates in carbohydrate degradation; glycolysis; D-glyceraldehyde 3-phosphate from glycerone phosphate: step 1/1. This is Triosephosphate isomerase, cytosolic (TPI) from Stellaria longipes (Longstalk starwort).